The chain runs to 408 residues: Putative transporter AmpG 2 (408 aa).

12 helical membrane-spanning segments follow: residues 11 to 31, 49 to 69, 84 to 104, 110 to 130, 154 to 174, 177 to 197, 224 to 244, 261 to 281, 294 to 311, 315 to 337, 353 to 373, and 382 to 402; these read IFNI…YLLT, IGLF…GPLL, YCLV…TSFN, TPFV…DMLI, FRIG…IISW, VYRT…FYPL, WIVI…LSIM, IGYK…GGFL, VLIY…LYFL, IISL…SPFF, IALI…ISGY, and YFFI…LYLP.

The protein belongs to the major facilitator superfamily.

It is found in the cell inner membrane. This chain is Putative transporter AmpG 2 (ampG2), found in Rickettsia typhi (strain ATCC VR-144 / Wilmington).